The sequence spans 917 residues: Protein Ami (917 aa).

A signal peptide spans 1-30 (MKKLVKSAVVFAGLVFIGTSATMITEKASA). The N-acetylmuramoyl-L-alanine amidase domain occupies 118–245 (KPEGIVIHET…YLGGTTHTDP (128 aa)). Residues 262-917 (LINEKYKAMQ…KAANLSAKKQ (656 aa)) form a GW repeat region, necessary and sufficient for cell surface attachment region. 8 GW domains span residues 279–358 (YDKA…TFYT), 361–435 (MEKT…TTKY), 440–519 (YDKA…TFYT), 522–596 (MEKN…ATQY), 601–679 (YDKA…TFYT), 682–756 (MEKT…TTKY), 761–840 (YDKA…TFYT), and 843–917 (MEKN…AKKQ).

It in the N-terminal section; belongs to the N-acetylmuramoyl-L-alanine amidase 2 family.

It is found in the cell surface. The protein localises to the cell membrane. Its function is as follows. A bacteriolysin able to lyse both L.monocytogenes and S.aureus. The sequence is that of Protein Ami from Listeria monocytogenes serotype 1/2a (strain EGD / Mackaness).